The following is a 152-amino-acid chain: Regulatory protein RecX (152 aa).

The protein belongs to the RecX family.

It localises to the cytoplasm. Its function is as follows. Modulates RecA activity. The polypeptide is Regulatory protein RecX (Chromobacterium violaceum (strain ATCC 12472 / DSM 30191 / JCM 1249 / CCUG 213 / NBRC 12614 / NCIMB 9131 / NCTC 9757 / MK)).